A 239-amino-acid chain; its full sequence is MECGDGPVPYRFSSPLHRGVLRSRYKRFLADVELENGQQIIAHCPNTGPMSGVCQVGAPVYLSHHPEPKRKLAYTWEMIQVDGVWVGINTSLPNRLVDWGLERGWFPQLAGFSRRQREVTCGKSKIDFLLTGDAGSAYLEVKNTTWAVGSRALFPDTVTTRGQKHLEDLIQIRQQGQRALLLYWINRADCTEFAPGEERDPRYARLFREALQAGVEMLPYRVEVSPTGIRPLGLAKIVV.

The protein belongs to the SfsA family.

This Synechococcus sp. (strain JA-2-3B'a(2-13)) (Cyanobacteria bacterium Yellowstone B-Prime) protein is Sugar fermentation stimulation protein homolog.